The following is a 1134-amino-acid chain: Ankyrin repeat and SAM domain-containing protein 1A (1134 aa).

Gly-2 carries the post-translational modification N-acetylglycine. A compositionally biased stretch (gly residues) spans 33–55 (GGGGGGGSGGGGGGSGGGGGGLG). A disordered region spans residues 33–57 (GGGGGGGSGGGGGGSGGGGGGLGSS). ANK repeat units follow at residues 79 to 108 (TGYT…LTNV), 112 to 141 (KGCY…SHTR), 148 to 177 (DNET…DPTM), 181 to 210 (KFET…NLLS), 214 to 243 (KKHT…DSNY), and 246 to 275 (EMGS…DVNI). A compositionally biased stretch (basic and acidic residues) spans 305 to 317 (HMTGKRSTKEVDK). Disordered stretches follow at residues 305–338 (HMTG…KSQG), 375–422 (SMAS…EEDH), and 469–498 (VDGK…VPEQ). Position 318 is a phosphothreonine (Thr-318). Over residues 328-337 (SMDSISQKSQ) the composition is skewed to polar residues. The span at 382–392 (SDQDSTNKEAE) shows a compositional bias: basic and acidic residues. Ser-507 is modified (phosphoserine). The interval 569–650 (LTGLPTTNSR…MGSRSESLSN (82 aa)) is disordered. The span at 572–588 (LPTTNSRSHPETLTHTA) shows a compositional bias: polar residues. Over residues 613 to 628 (PKAELKLSRSLSKSDS) the composition is skewed to basic and acidic residues. Phosphoserine is present on residues Ser-620, Ser-622, Ser-624, Ser-626, Ser-628, Ser-647, Ser-661, Ser-663, Ser-666, and Ser-677. Polar residues predominate over residues 633–650 (CSPTEDATMGSRSESLSN). 2 consecutive SAM domains span residues 696 to 762 (TLEQ…LPKV) and 770 to 837 (NSPP…YEEP). The span at 856-868 (TSSPLSQNDSCTG) shows a compositional bias: polar residues. 2 disordered regions span residues 856-896 (TSSP…APSR) and 1079-1134 (AEMI…LSTN). A Phosphoserine modification is found at Ser-887. The 156-residue stretch at 936–1091 (IFESCGYEAN…IETKSSKPVP (156 aa)) folds into the PID domain. The span at 1123-1134 (PKPDSKRSLSTN) shows a compositional bias: basic and acidic residues.

As to quaternary structure, interacts (via SAM domain) with EPHA2 (via SAM domain). Interacts with EPHA8; EPHA8 kinase activity-independent but stimulated by EPHA8 ubiquitination. Interacts (via SAM domain) with EPHA6 (via SAM domain). Phosphorylated on tyrosine residues in response to EGF and PDGF. Widely expressed (at protein level).

It localises to the cytoplasm. The protein resides in the cell projection. Regulator of different signaling pathways. Regulates EPHA8 receptor tyrosine kinase signaling to control cell migration and neurite retraction. The chain is Ankyrin repeat and SAM domain-containing protein 1A (ANKS1A) from Homo sapiens (Human).